Here is an 85-residue protein sequence, read N- to C-terminus: Neutrophil elastase 2A (85 aa).

Positions 1–85 (IVGGRAAEPH…VAQGVFSFVR (85 aa)) constitute a Peptidase S1 domain. Ser-67 (charge relay system) is an active-site residue.

It belongs to the peptidase S1 family. Elastase subfamily.

In terms of biological role, may be involved in the degradation of connective tissue in chronic lung disease. The protein is Neutrophil elastase 2A of Equus caballus (Horse).